The sequence spans 195 residues: Peptidyl-tRNA hydrolase (195 aa).

Position 17 (Tyr-17) interacts with tRNA. The Proton acceptor role is filled by His-22. TRNA-binding residues include Phe-68, Asn-70, and Asn-116.

It belongs to the PTH family. As to quaternary structure, monomer.

It localises to the cytoplasm. It carries out the reaction an N-acyl-L-alpha-aminoacyl-tRNA + H2O = an N-acyl-L-amino acid + a tRNA + H(+). Its function is as follows. Hydrolyzes ribosome-free peptidyl-tRNAs (with 1 or more amino acids incorporated), which drop off the ribosome during protein synthesis, or as a result of ribosome stalling. Functionally, catalyzes the release of premature peptidyl moieties from peptidyl-tRNA molecules trapped in stalled 50S ribosomal subunits, and thus maintains levels of free tRNAs and 50S ribosomes. The protein is Peptidyl-tRNA hydrolase of Erwinia tasmaniensis (strain DSM 17950 / CFBP 7177 / CIP 109463 / NCPPB 4357 / Et1/99).